The primary structure comprises 141 residues: Zinc finger HIT domain-containing protein 3 (141 aa).

An HIT-type; degenerate zinc finger spans residues 1-28 (LEKPKYRCPACRVPYCSVACFRKHKEQC). The Zn(2+) site is built by C8, C11, H24, and C28. S66 carries the post-translational modification Phosphoserine.

Thyroid receptor interacting proteins (TRIPs) specifically interact with the ligand binding domain of the thyroid receptor (TR). Requires the presence of thyroid hormone for its interaction. Interacts with NUFIP1. Interacts (via HIT-type zinc finger) with the RUVBL1/RUVBL2 complex in the presence of ADP.

It localises to the cytoplasm. The protein localises to the nucleus. The protein is Zinc finger HIT domain-containing protein 3 (ZNHIT3) of Pan troglodytes (Chimpanzee).